A 188-amino-acid chain; its full sequence is Putative manganese efflux pump MntP (188 aa).

The next 6 membrane-spanning stretches (helical) occupy residues 1–21 (MLIQ…AVSI), 40–60 (LWFG…ASTF), 64–84 (VTAV…GNMV), 105–127 (HMLP…FAFM), 131–153 (IWLS…LYIG), and 166–186 (IAGG…HLGF).

Belongs to the MntP (TC 9.B.29) family.

The protein resides in the cell membrane. Probably functions as a manganese efflux pump. The sequence is that of Putative manganese efflux pump MntP from Bifidobacterium adolescentis (strain ATCC 15703 / DSM 20083 / NCTC 11814 / E194a).